An 82-amino-acid chain; its full sequence is MVTIRLQRGGAKKRPFYQVVVADSRNARDGRFIERVGFFNPVASGNAEKLNLDLARIEHWVGTGAAVSDRVAKLIKDAAKAA.

Belongs to the bacterial ribosomal protein bS16 family.

This is Small ribosomal subunit protein bS16 from Aeromonas hydrophila subsp. hydrophila (strain ATCC 7966 / DSM 30187 / BCRC 13018 / CCUG 14551 / JCM 1027 / KCTC 2358 / NCIMB 9240 / NCTC 8049).